The chain runs to 536 residues: G-protein coupled receptor Mth2 (536 aa).

5 disulfide bridges follow: cysteine 17–cysteine 71, cysteine 73–cysteine 78, cysteine 82–cysteine 177, cysteine 83–cysteine 96, and cysteine 138–cysteine 197. N-linked (GlcNAc...) asparagine glycosylation is found at asparagine 24 and asparagine 33. 5 N-linked (GlcNAc...) asparagine glycosylation sites follow: asparagine 103, asparagine 113, asparagine 118, asparagine 159, and asparagine 184. A helical transmembrane segment spans residues 212-232 (YAMMFSIPFMMLTIAVYLLIP). At 233 to 241 (ELRNQHGKS) the chain is on the cytoplasmic side. Residues 242-262 (LVCYLIGLTVGYSSLCYVQLY) traverse the membrane as a helical segment. Residues 263-273 (QVDATGVTCKV) lie on the Extracellular side of the membrane. Residues 274-294 (FGYTAYFFFMGAYMWLSVISF) traverse the membrane as a helical segment. Residues 295 to 314 (DLWHNFRGTRGINRFQEKKR) are Cytoplasmic-facing. Residues 315-335 (FLFYSLYSWGIALVFLAFTYC) form a helical membrane-spanning segment. The Extracellular segment spans residues 336–365 (AQQLSNLPDNLKPGIGDGVYCWLDMSNWAA). Residues 366-386 (MIYFYGPILAIVVANTIMFIM) traverse the membrane as a helical segment. The Cytoplasmic segment spans residues 387-417 (TAIKIHGVQREMARIIASENSTKNLRTEKDK). A helical membrane pass occupies residues 418–438 (FGLFLRLFLIMGITWLTELIS). Residues 439–449 (YFVGSDKGWSK) are Extracellular-facing. Residues 450–470 (LFYISDLANAMQGFLIFMLFV) traverse the membrane as a helical segment. Topologically, residues 471-536 (MKKKVKHLIT…VDPQKTTIFR (66 aa)) are cytoplasmic. The tract at residues 487–506 (RDGSNQRQSQYSTKTTSSSV) is disordered. A compositionally biased stretch (low complexity) spans 492–505 (QRQSQYSTKTTSSS).

This sequence belongs to the G-protein coupled receptor 2 family. Mth subfamily. In terms of assembly, homodimer.

The protein localises to the cell membrane. Its function is as follows. Involved in biological aging and stress response. Essential for adult survival. The chain is G-protein coupled receptor Mth2 (mth2) from Drosophila simulans (Fruit fly).